The chain runs to 249 residues: Aquaporin SIP2-1 (249 aa).

Helical transmembrane passes span P12 to V32 and V53 to A73. The short motif at N76–L78 is the NPA 1 element. 4 helical membrane-spanning segments follow: residues A104 to G124, A133 to K155, I176 to W196, and L210 to F230. The short motif at N189 to A191 is the NPA 2 element.

Belongs to the MIP/aquaporin (TC 1.A.8) family. SIP (TC 1.A.8.10) subfamily.

The protein localises to the membrane. Its function is as follows. Aquaporins facilitate the transport of water and small neutral solutes across cell membranes. The sequence is that of Aquaporin SIP2-1 (SIP2-1) from Zea mays (Maize).